We begin with the raw amino-acid sequence, 408 residues long: UDP-N-acetylglucosamine--dolichyl-phosphate N-acetylglucosaminephosphotransferase (408 aa).

Topologically, residues 1–10 are lumenal; sequence MWAFSELPMP. The chain crosses the membrane as a helical span at residues 11–38; sequence LLINLIVSLLGFVATVTLIPAFRGHFIA. Topologically, residues 39 to 58 are cytoplasmic; it reads ARLCGQDLNKTSRQQIPESQ. UDP-N-acetyl-alpha-D-glucosamine-binding positions include 44–46 and Glu-56; that span reads QDL. Leu-46 is a binding site for tunicamycin A1. Residues 59 to 78 traverse the membrane as a helical segment; that stretch reads GVISGAVFLIILFCFIPFPF. At 79 to 91 the chain is on the lumenal side; that stretch reads LNCFVKEQCKAFP. Residues 92 to 118 form a helical membrane-spanning segment; that stretch reads HHEFVALIGALLAICCMIFLGFADDVL. Residue Asn-119 participates in tunicamycin A1 binding. At 119–121 the chain is on the cytoplasmic side; sequence NLR. The chain crosses the membrane as a helical span at residues 122–143; sequence WRHKLLLPTAASLPLLMVYFTN. Lys-125 lines the dolichyl phosphate pocket. Over 144–166 the chain is Lumenal; sequence FGNTTIVVPKPFRPILGLHLDLG. Asn-146 carries N-linked (GlcNAc...) asparagine glycosylation. A helical membrane pass occupies residues 167–186; it reads ILYYVYMGLLAVFCTNAINI. Position 178-186 (178-186) interacts with dolichyl phosphate; the sequence is VFCTNAINI. Asn-185 is a tunicamycin A1 binding site. Asn-185 is a binding site for Mg(2+). Over 187–192 the chain is Cytoplasmic; sequence LAGING. Residue Asn-191 participates in UDP-N-acetyl-alpha-D-glucosamine binding. The chain crosses the membrane as a helical span at residues 193–213; that stretch reads LEAGQSLVISASIIVFNLVEL. Residues 214 to 218 lie on the Lumenal side of the membrane; the sequence is EGDCR. Residues 219 to 242 form a helical membrane-spanning segment; that stretch reads DDHVFSLYFMIPFFFTTLGLLYHN. Topologically, residues 243–250 are cytoplasmic; that stretch reads WYPSRVFV. Residues 251-269 traverse the membrane as a helical segment; the sequence is GDTFCYFAGMTFAVVGILG. Asp-252 is a tunicamycin A1 binding site. Residue Asp-252 participates in Mg(2+) binding. At 270-271 the chain is on the lumenal side; the sequence is HF. A helical transmembrane segment spans residues 272–293; that stretch reads SKTMLLFFMPQVFNFLYSLPQL. Topologically, residues 294-375 are cytoplasmic; sequence LHIIPCPRHR…LLLKVLGPIH (82 aa). 301–303 lines the UDP-N-acetyl-alpha-D-glucosamine pocket; the sequence is RHR. Arg-303 serves as a coordination point for tunicamycin A1. The helical transmembrane segment at 376 to 400 threads the bilayer; it reads ERNLTLLLLLLQILGSAITFSIRYQ. Topologically, residues 401–408 are lumenal; the sequence is LVRLFYDV.

Belongs to the glycosyltransferase 4 family. In terms of assembly, homodimer. It depends on Mg(2+) as a cofactor.

The protein localises to the endoplasmic reticulum membrane. It carries out the reaction a di-trans,poly-cis-dolichyl phosphate + UDP-N-acetyl-alpha-D-glucosamine = an N-acetyl-alpha-D-glucosaminyl-diphospho-di-trans,poly-cis-dolichol + UMP. The protein operates within protein modification; protein glycosylation. With respect to regulation, inhibited by natural nucleoside antibiotic tunicamycin, which acts as a structural analog and competitor of UDP-GlcNAc. Activated by mannosylphosphoryldolichol and phospholipids such as phosphatidylglycerol and phosphatidylcholine. In terms of biological role, UDP-N-acetylglucosamine--dolichyl-phosphate N-acetylglucosaminephosphotransferase that operates in the biosynthetic pathway of dolichol-linked oligosaccharides, the glycan precursors employed in protein asparagine (N)-glycosylation. The assembly of dolichol-linked oligosaccharides begins on the cytosolic side of the endoplasmic reticulum membrane and finishes in its lumen. The sequential addition of sugars to dolichol pyrophosphate produces dolichol-linked oligosaccharides containing fourteen sugars, including two GlcNAcs, nine mannoses and three glucoses. Once assembled, the oligosaccharide is transferred from the lipid to nascent proteins by oligosaccharyltransferases. Catalyzes the initial step of dolichol-linked oligosaccharide biosynthesis, transfering GlcNAc-1-P from cytosolic UDP-GlcNAc onto the carrier lipid dolichyl phosphate (P-dolichol), yielding GlcNAc-P-P-dolichol embedded in the cytoplasmic leaflet of the endoplasmic reticulum membrane. The chain is UDP-N-acetylglucosamine--dolichyl-phosphate N-acetylglucosaminephosphotransferase from Homo sapiens (Human).